A 117-amino-acid polypeptide reads, in one-letter code: Immunoglobulin heavy variable 7-4-1 (117 aa).

The signal sequence occupies residues 1 to 19; sequence MDWTWRILFLVAAATGAHS. The interval 20 to 44 is framework-1; that stretch reads QVQLVQSGSELKKPGASVKVSCKAS. The Ig-like domain maps to 20-117; the sequence is QVQLVQSGSE…EDTAVYYCAR (98 aa). Residues C41 and C115 are joined by a disulfide bond. The segment at 45-52 is complementarity-determining-1; sequence GYTFTSYA. The interval 53 to 69 is framework-2; the sequence is MNWVRQAPGQGLEWMGW. Positions 70 to 77 are complementarity-determining-2; it reads INTNTGNP. Positions 78-115 are framework-3; the sequence is TYAQGFTGRFVFSLDTSVSTAYLQICSLKAEDTAVYYC. Residues 116-117 are complementarity-determining-3; sequence AR.

Immunoglobulins are composed of two identical heavy chains and two identical light chains; disulfide-linked.

It is found in the secreted. Its subcellular location is the cell membrane. Functionally, v region of the variable domain of immunoglobulin heavy chains that participates in the antigen recognition. Immunoglobulins, also known as antibodies, are membrane-bound or secreted glycoproteins produced by B lymphocytes. In the recognition phase of humoral immunity, the membrane-bound immunoglobulins serve as receptors which, upon binding of a specific antigen, trigger the clonal expansion and differentiation of B lymphocytes into immunoglobulins-secreting plasma cells. Secreted immunoglobulins mediate the effector phase of humoral immunity, which results in the elimination of bound antigens. The antigen binding site is formed by the variable domain of one heavy chain, together with that of its associated light chain. Thus, each immunoglobulin has two antigen binding sites with remarkable affinity for a particular antigen. The variable domains are assembled by a process called V-(D)-J rearrangement and can then be subjected to somatic hypermutations which, after exposure to antigen and selection, allow affinity maturation for a particular antigen. This Homo sapiens (Human) protein is Immunoglobulin heavy variable 7-4-1.